The chain runs to 221 residues: Transcription factor MYB1 (221 aa).

HTH myb-type domains follow at residues 1–57 (MESV…LNYL) and 58–112 (RPNI…QKKL). 2 DNA-binding regions (H-T-H motif) span residues 33–57 (WHQV…LNYL) and 85–108 (WSLI…NTHL). The disordered stretch occupies residues 126-154 (KTIVPKGTEAQPRAHPKSPPRPSPPSNNE).

In terms of tissue distribution, expressed in stems and leaves. Expressed at low levels in ovaries.

The protein localises to the nucleus. Transcription activator involved in the regulation of anthocyanin biosynthesis in red-fleshed kiwifruit varieties. Activates the transcription of genes involved in anthocyanin biosynthesis, such as dihydroflavonol reductase (DFR), anthocyanidin synthase (ANS) and UDP flavonoid glycosyltransferase (UFGT). The polypeptide is Transcription factor MYB1 (Actinidia chinensis var. chinensis (Chinese soft-hair kiwi)).